Here is a 253-residue protein sequence, read N- to C-terminus: Dihydroanticapsin 7-dehydrogenase (253 aa).

9–31 (LITGGASGIGYAAVQAFLGQQAN) contributes to the NAD(+) binding site. Ser-139 is a substrate binding site. The Proton acceptor role is filled by Tyr-152.

Belongs to the short-chain dehydrogenases/reductases (SDR) family.

The enzyme catalyses L-dihydroanticapsin + NAD(+) = L-anticapsin + NADH + H(+). Its pathway is antibiotic biosynthesis; bacilysin biosynthesis. Part of the bacABCDEFG operon responsible for the biosynthesis of bacilysin, an irreversible inactivator of the glutaminase domain of glucosamine synthetase. Catalyzes the dehydrogenation of the C7-hydroxyl group in the 4S-tetrahydrotyrosine (4S-H4Tyr) to yield anticapsin (epoxycyclohexanonyl-Ala). It is not able to oxidize the 4R-H4Tyr diastereomer and the dihydrobacilysin dipeptide (L-Ala-4S-H4Tyr dipeptide). The chain is Dihydroanticapsin 7-dehydrogenase from Bacillus subtilis (strain 168).